The sequence spans 1010 residues: Retinoblastoma-related protein 3 (1010 aa).

A domain A region spans residues 416–616; that stretch reads TPVSTAMTTA…EKGSSMYNSL (201 aa). A pocket region spans residues 416–858; sequence TPVSTAMTTA…NEVFIPAVKS (443 aa). The tract at residues 617–727 is spacer; the sequence is IVARPALSVE…PAAGGETCAE (111 aa). Residues 728 to 858 form a domain B region; that stretch reads TGIGVFFSKI…NEVFIPAVKS (131 aa). Disordered stretches follow at residues 867–889 and 986–1010; these read ASAS…FPES and GSDR…PSDS.

Belongs to the retinoblastoma protein (RB) family.

It localises to the nucleus. Functionally, regulator of biological processes that recruits a histone deacetylase to control gene transcription. May play a role in the entry into mitosis, negatively regulating the cell proliferation. Formation of stable complexes with geminiviridae replication-associated proteins may create a cellular environment which favors viral DNA replication. The sequence is that of Retinoblastoma-related protein 3 (RBR3) from Zea mays (Maize).